We begin with the raw amino-acid sequence, 288 residues long: UDP-3-O-acyl-N-acetylglucosamine deacetylase (288 aa).

Residues histidine 79, histidine 236, and aspartate 240 each contribute to the Zn(2+) site. The active-site Proton donor is the histidine 263.

Belongs to the LpxC family. The cofactor is Zn(2+).

The enzyme catalyses a UDP-3-O-[(3R)-3-hydroxyacyl]-N-acetyl-alpha-D-glucosamine + H2O = a UDP-3-O-[(3R)-3-hydroxyacyl]-alpha-D-glucosamine + acetate. It participates in glycolipid biosynthesis; lipid IV(A) biosynthesis; lipid IV(A) from (3R)-3-hydroxytetradecanoyl-[acyl-carrier-protein] and UDP-N-acetyl-alpha-D-glucosamine: step 2/6. Catalyzes the hydrolysis of UDP-3-O-myristoyl-N-acetylglucosamine to form UDP-3-O-myristoylglucosamine and acetate, the committed step in lipid A biosynthesis. The sequence is that of UDP-3-O-acyl-N-acetylglucosamine deacetylase from Rickettsia prowazekii (strain Madrid E).